The primary structure comprises 714 residues: Fatty acid oxidation complex subunit alpha (714 aa).

An enoyl-CoA hydratase region spans residues 1-190 (MEMTSAFTLN…KLGLVDDVVP (190 aa)). Residues 306–714 (APLNSVGILG…FWKTTATDLQ (409 aa)) are 3-hydroxyacyl-CoA dehydrogenase.

The protein in the N-terminal section; belongs to the enoyl-CoA hydratase/isomerase family. In the central section; belongs to the 3-hydroxyacyl-CoA dehydrogenase family. In terms of assembly, heterotetramer of two alpha chains (FadJ) and two beta chains (FadI).

It localises to the cytoplasm. The enzyme catalyses a (3S)-3-hydroxyacyl-CoA = a (2E)-enoyl-CoA + H2O. It catalyses the reaction a 4-saturated-(3S)-3-hydroxyacyl-CoA = a (3E)-enoyl-CoA + H2O. It carries out the reaction a (3S)-3-hydroxyacyl-CoA + NAD(+) = a 3-oxoacyl-CoA + NADH + H(+). The catalysed reaction is (3S)-3-hydroxybutanoyl-CoA = (3R)-3-hydroxybutanoyl-CoA. Its pathway is lipid metabolism; fatty acid beta-oxidation. Its function is as follows. Catalyzes the formation of a hydroxyacyl-CoA by addition of water on enoyl-CoA. Also exhibits 3-hydroxyacyl-CoA epimerase and 3-hydroxyacyl-CoA dehydrogenase activities. This Escherichia coli O8 (strain IAI1) protein is Fatty acid oxidation complex subunit alpha.